A 436-amino-acid chain; its full sequence is Gamma-glutamyl phosphate reductase (436 aa).

The protein belongs to the gamma-glutamyl phosphate reductase family.

The protein resides in the cytoplasm. The catalysed reaction is L-glutamate 5-semialdehyde + phosphate + NADP(+) = L-glutamyl 5-phosphate + NADPH + H(+). Its pathway is amino-acid biosynthesis; L-proline biosynthesis; L-glutamate 5-semialdehyde from L-glutamate: step 2/2. In terms of biological role, catalyzes the NADPH-dependent reduction of L-glutamate 5-phosphate into L-glutamate 5-semialdehyde and phosphate. The product spontaneously undergoes cyclization to form 1-pyrroline-5-carboxylate. This is Gamma-glutamyl phosphate reductase from Prochlorococcus marinus (strain AS9601).